The chain runs to 1333 residues: DNA-directed RNA polymerase subunit beta' (1333 aa).

Zn(2+)-binding residues include Cys-60, Cys-62, Cys-75, and Cys-78. Mg(2+) contacts are provided by Asp-535, Asp-537, and Asp-539. Cys-901, Cys-983, Cys-990, and Cys-993 together coordinate Zn(2+).

It belongs to the RNA polymerase beta' chain family. In terms of assembly, the RNAP catalytic core consists of 2 alpha, 1 beta, 1 beta' and 1 omega subunit. When a sigma factor is associated with the core the holoenzyme is formed, which can initiate transcription. Mg(2+) is required as a cofactor. It depends on Zn(2+) as a cofactor.

It catalyses the reaction RNA(n) + a ribonucleoside 5'-triphosphate = RNA(n+1) + diphosphate. In terms of biological role, DNA-dependent RNA polymerase catalyzes the transcription of DNA into RNA using the four ribonucleoside triphosphates as substrates. This Corynebacterium glutamicum (strain ATCC 13032 / DSM 20300 / JCM 1318 / BCRC 11384 / CCUG 27702 / LMG 3730 / NBRC 12168 / NCIMB 10025 / NRRL B-2784 / 534) protein is DNA-directed RNA polymerase subunit beta'.